The sequence spans 405 residues: Tryptophan synthase beta chain (405 aa).

N6-(pyridoxal phosphate)lysine is present on lysine 95.

The protein belongs to the TrpB family. As to quaternary structure, tetramer of two alpha and two beta chains. Pyridoxal 5'-phosphate serves as cofactor.

It carries out the reaction (1S,2R)-1-C-(indol-3-yl)glycerol 3-phosphate + L-serine = D-glyceraldehyde 3-phosphate + L-tryptophan + H2O. Its pathway is amino-acid biosynthesis; L-tryptophan biosynthesis; L-tryptophan from chorismate: step 5/5. In terms of biological role, the beta subunit is responsible for the synthesis of L-tryptophan from indole and L-serine. The polypeptide is Tryptophan synthase beta chain (Pseudomonas putida (strain ATCC 700007 / DSM 6899 / JCM 31910 / BCRC 17059 / LMG 24140 / F1)).